We begin with the raw amino-acid sequence, 177 residues long: Adenine phosphoribosyltransferase (177 aa).

The protein belongs to the purine/pyrimidine phosphoribosyltransferase family. As to quaternary structure, homodimer.

The protein localises to the cytoplasm. The catalysed reaction is AMP + diphosphate = 5-phospho-alpha-D-ribose 1-diphosphate + adenine. It participates in purine metabolism; AMP biosynthesis via salvage pathway; AMP from adenine: step 1/1. Catalyzes a salvage reaction resulting in the formation of AMP, that is energically less costly than de novo synthesis. This chain is Adenine phosphoribosyltransferase, found in Chlorobium luteolum (strain DSM 273 / BCRC 81028 / 2530) (Pelodictyon luteolum).